Here is a 430-residue protein sequence, read N- to C-terminus: UDP-N-acetylmuramoylalanine--D-glutamate ligase (430 aa).

ATP is bound at residue 109 to 115 (GTDGKST).

The protein belongs to the MurCDEF family.

The protein resides in the cytoplasm. It catalyses the reaction UDP-N-acetyl-alpha-D-muramoyl-L-alanine + D-glutamate + ATP = UDP-N-acetyl-alpha-D-muramoyl-L-alanyl-D-glutamate + ADP + phosphate + H(+). The protein operates within cell wall biogenesis; peptidoglycan biosynthesis. In terms of biological role, cell wall formation. Catalyzes the addition of glutamate to the nucleotide precursor UDP-N-acetylmuramoyl-L-alanine (UMA). The protein is UDP-N-acetylmuramoylalanine--D-glutamate ligase of Thermotoga sp. (strain RQ2).